Consider the following 72-residue polypeptide: Toxin Acra II-3 (72 aa).

The region spanning 4–67 (PGNYPLDTRG…VWNAAKNYCK (64 aa)) is the LCN-type CS-alpha/beta domain. Cystine bridges form between C18-C41, C27-C46, and C31-C48.

It belongs to the long (3 C-C) scorpion toxin superfamily. Sodium channel inhibitor family. Beta subfamily. As to expression, expressed by the venom gland.

It localises to the secreted. Functionally, binds to sodium channels (Nav) and affects the channel activation process. The sequence is that of Toxin Acra II-3 from Androctonus crassicauda (Arabian fat-tailed scorpion).